Consider the following 467-residue polypeptide: 3-isopropylmalate dehydratase large subunit (467 aa).

Residues Cys347, Cys408, and Cys411 each contribute to the [4Fe-4S] cluster site.

The protein belongs to the aconitase/IPM isomerase family. LeuC type 1 subfamily. In terms of assembly, heterodimer of LeuC and LeuD. [4Fe-4S] cluster serves as cofactor.

The catalysed reaction is (2R,3S)-3-isopropylmalate = (2S)-2-isopropylmalate. It functions in the pathway amino-acid biosynthesis; L-leucine biosynthesis; L-leucine from 3-methyl-2-oxobutanoate: step 2/4. In terms of biological role, catalyzes the isomerization between 2-isopropylmalate and 3-isopropylmalate, via the formation of 2-isopropylmaleate. The chain is 3-isopropylmalate dehydratase large subunit from Bordetella pertussis (strain Tohama I / ATCC BAA-589 / NCTC 13251).